The chain runs to 128 residues: Large ribosomal subunit protein bL20c (128 aa).

The protein belongs to the bacterial ribosomal protein bL20 family. Component of the chloroplast large ribosomal subunit (LSU). Mature 70S chloroplast ribosomes of higher plants consist of a small (30S) and a large (50S) subunit. The 30S small subunit contains 1 molecule of ribosomal RNA (16S rRNA) and 24 different proteins. The 50S large subunit contains 3 rRNA molecules (23S, 5S and 4.5S rRNA) and 33 different proteins.

Its subcellular location is the plastid. The protein resides in the chloroplast. In terms of biological role, component of the chloroplast ribosome (chloro-ribosome), a dedicated translation machinery responsible for the synthesis of chloroplast genome-encoded proteins, including proteins of the transcription and translation machinery and components of the photosynthetic apparatus. In Spinacia oleracea (Spinach), this protein is Large ribosomal subunit protein bL20c (rpl20).